Here is a 257-residue protein sequence, read N- to C-terminus: Geranylgeranylglyceryl phosphate synthase (257 aa).

Residues aspartate 27 and threonine 57 each coordinate Mg(2+). Sn-glycerol 1-phosphate is bound by residues 175-181, 207-208, and 229-230; these read YLEAGSG, GG, and GN.

It belongs to the GGGP/HepGP synthase family. Group II subfamily. Mg(2+) serves as cofactor.

It localises to the cytoplasm. It carries out the reaction sn-glycerol 1-phosphate + (2E,6E,10E)-geranylgeranyl diphosphate = sn-3-O-(geranylgeranyl)glycerol 1-phosphate + diphosphate. Its pathway is membrane lipid metabolism; glycerophospholipid metabolism. Its function is as follows. Prenyltransferase that catalyzes the transfer of the geranylgeranyl moiety of geranylgeranyl diphosphate (GGPP) to the C3 hydroxyl of sn-glycerol-1-phosphate (G1P). This reaction is the first ether-bond-formation step in the biosynthesis of archaeal membrane lipids. The polypeptide is Geranylgeranylglyceryl phosphate synthase (Sulfolobus acidocaldarius (strain ATCC 33909 / DSM 639 / JCM 8929 / NBRC 15157 / NCIMB 11770)).